We begin with the raw amino-acid sequence, 561 residues long: Amidophosphoribosyltransferase 2, chloroplastic (561 aa).

Low complexity predominate over residues 1–27; the sequence is MAATSSISSSLSLNAKPNKLSNNNNNN. Residues 1 to 36 form a disordered region; that stretch reads MAATSSISSSLSLNAKPNKLSNNNNNNKPHRFLRNP. Residues 1-53 constitute a chloroplast transit peptide; sequence MAATSSISSSLSLNAKPNKLSNNNNNNKPHRFLRNPFLNPSSSSFSPLPASIS. Cys87 acts as the Nucleophile in catalysis. The 221-residue stretch at 87–307 folds into the Glutamine amidotransferase type-2 domain; it reads CGVVGIYGDS…PGEVLVVDKD (221 aa). Residues Cys323, Cys469, Cys520, and Cys523 each contribute to the [4Fe-4S] cluster site.

This sequence in the C-terminal section; belongs to the purine/pyrimidine phosphoribosyltransferase family. The cofactor is [4Fe-4S] cluster. Mg(2+) is required as a cofactor. In terms of tissue distribution, mostly expressed in leaves, and, to a lower extent, in cotyledons.

The protein resides in the plastid. Its subcellular location is the chloroplast stroma. It catalyses the reaction 5-phospho-beta-D-ribosylamine + L-glutamate + diphosphate = 5-phospho-alpha-D-ribose 1-diphosphate + L-glutamine + H2O. The protein operates within purine metabolism; IMP biosynthesis via de novo pathway; N(1)-(5-phospho-D-ribosyl)glycinamide from 5-phospho-alpha-D-ribose 1-diphosphate: step 1/2. With respect to regulation, inhibited by the phenyltriazole acetic acid compound [5-(4-chlorophenyl)-1-isopropyl-1H-[1,2,4]triazol-3-yl]-acetic acid (DAS734), a bleaching herbicide. In terms of biological role, catalyzes the first committed step of 'de novo purine biosynthesis from glutamine. Required for chloroplast biogenesis and cell division. Confers sensitivity to the phenyltriazole acetic acid compound [5-(4-chlorophenyl)-1-isopropyl-1H-[1,2,4]triazol-3-yl]-acetic acid (DAS734), a bleaching herbicide. The polypeptide is Amidophosphoribosyltransferase 2, chloroplastic (ASE2) (Arabidopsis thaliana (Mouse-ear cress)).